The following is a 524-amino-acid chain: DNA damage-binding protein CMR1 (524 aa).

A disordered region spans residues 35 to 79; the sequence is EKIIPKPAPPKPKRASAPRAKREPVKRETARPTRQSSRLAGLDAD. Positions 54–65 are enriched in basic and acidic residues; the sequence is AKREPVKRETAR. WD repeat units follow at residues 184–225, 245–285, 295–332, 336–376, 385–425, 447–490, and 493–524; these read LVPQ…VKAE, THSR…STEA, LPIS…STAE, LTDQ…GKGD, THDS…KWTA, GRWV…LAQL, and DGIT…CLWM.

Belongs to the WD repeat DDB2/WDR76 family.

In terms of biological role, DNA-binding protein that binds to both single- and double-stranded DNA. Binds preferentially to UV-damaged DNA. May be involved in DNA-metabolic processes. This is DNA damage-binding protein CMR1 from Chaetomium globosum (strain ATCC 6205 / CBS 148.51 / DSM 1962 / NBRC 6347 / NRRL 1970) (Soil fungus).